A 305-amino-acid chain; its full sequence is Olfactory receptor 4F4 (305 aa).

Over 1–18 (MVTEFIFLGLSDSQELQT) the chain is Extracellular. A helical transmembrane segment spans residues 19 to 42 (FLFMLFFVFYGGIVFGNLLIVITV). Over 43–50 (VSDSHLHS) the chain is Cytoplasmic. Residues 51–72 (PMYFLLANLSLIDLSLSSVTAP) form a helical membrane-spanning segment. The Extracellular portion of the chain corresponds to 73-93 (KMITDFFSQRKVISFKGCLVQ). A disulfide bond links Cys90 and Cys182. Residues 94–113 (IFLLHFFGGSEMVILIAMGF) form a helical membrane-spanning segment. The Cytoplasmic segment spans residues 114 to 132 (DRYIAICKPLHYTTIMCGN). The chain crosses the membrane as a helical span at residues 133–151 (ACVGIMAVAWGIGFLHSVS). Over 152-188 (QLAFAVHLPFCGPNEVDSFYCDLPRVIKLACTDTYRL) the chain is Extracellular. Residues 189–212 (DIMVIANSGVLTVCSFVLLIISYT) form a helical membrane-spanning segment. Topologically, residues 213-228 (IILMTIQHCPLDKSSK) are cytoplasmic. A helical transmembrane segment spans residues 229 to 251 (ALSTLTAHITVVLLFFGPCVFIY). Topologically, residues 252–262 (AWPFPIKSLDK) are extracellular. A helical membrane pass occupies residues 263–282 (FLAVFYSVITPLLNPIIYTL). At 283-305 (RNKDMKTAIRRLRKWDAHSSVKF) the chain is on the cytoplasmic side.

The protein belongs to the G-protein coupled receptor 1 family.

The protein localises to the cell membrane. Odorant receptor. The chain is Olfactory receptor 4F4 (OR4F4) from Homo sapiens (Human).